The chain runs to 433 residues: MSFPKELEKVLEITKAQNVWRRTQTLNLIASENVMSPLAESVYMSDFMSRYAEGKPYKRYYQGTKYTDEIETLAMDLMNEITNSKDCDLRPTSGTIANAAVFRVLAEPGDKALIAPVQAGAHVSHTKFGTLGALGIQHIEMPFDEENINVDVDKAIKMIEEVKPKFVVLGGSLYLFPHPTKELAPHVHAVGAKLVYDAAHVYGLIEGKVWSSPLKEGADIMTVSTHKTFPGPQGGAIFSDGSEVFKQVSRTIFPWFVSNHHLHRLPATAVTAIEMKYFGESYANQITRNSKALAEALAERGFKVIGENLGYTKSHQVAVDVRQFGGGNKIAKLLEDANIIVNKNLLPYDKPENVSDPSGLRIGVQEMTRYGMKESEMEEIAELFKKVIIDKKDVNEVKKEVIDMRKNFLEVKYTFDDMKDLEKYSSKSLKLII.

Position 121-123 (121-123) interacts with (6S)-5,6,7,8-tetrahydrofolate; the sequence is AHV. Lys227 is subject to N6-(pyridoxal phosphate)lysine. A (6S)-5,6,7,8-tetrahydrofolate-binding site is contributed by Glu243.

The protein belongs to the SHMT family. As to quaternary structure, homodimer. It depends on pyridoxal 5'-phosphate as a cofactor.

Its subcellular location is the cytoplasm. Its pathway is amino-acid biosynthesis; glycine biosynthesis; glycine from L-serine: step 1/1. In terms of biological role, catalyzes the reversible interconversion of serine and glycine with a modified folate serving as the one-carbon carrier. Also exhibits a pteridine-independent aldolase activity toward beta-hydroxyamino acids, producing glycine and aldehydes, via a retro-aldol mechanism. This chain is Serine hydroxymethyltransferase, found in Saccharolobus islandicus (strain Y.N.15.51 / Yellowstone #2) (Sulfolobus islandicus).